The primary structure comprises 464 residues: UDP-glycosyltransferase 83A1 (464 aa).

Residues Ser295, 341–343, 358–366, and 380–383 contribute to the UDP-alpha-D-glucose site; these read APQ, HCGWNSTLE, and FADQ.

It belongs to the UDP-glycosyltransferase family.

The protein is UDP-glycosyltransferase 83A1 (UGT83A1) of Arabidopsis thaliana (Mouse-ear cress).